The sequence spans 89 residues: Putative regulatory protein BPUM_1466 (89 aa).

The protein belongs to the RemA family.

In Bacillus pumilus (strain SAFR-032), this protein is Putative regulatory protein BPUM_1466.